The following is a 469-amino-acid chain: Small ribosomal subunit protein mS29 (469 aa).

L150 serves as a coordination point for ATP.

The protein belongs to the mitochondrion-specific ribosomal protein mS29 family. As to quaternary structure, component of the mitochondrial small ribosomal subunit (mt-SSU). Mature N.crassa 74S mitochondrial ribosomes consist of a small (37S) and a large (54S) subunit. The 37S small subunit contains a 16S ribosomal RNA (16S mt-rRNA) and 32 different proteins. The 54S large subunit contains a 23S rRNA (23S mt-rRNA) and 42 different proteins.

The protein resides in the mitochondrion. Functionally, component of the mitochondrial ribosome (mitoribosome), a dedicated translation machinery responsible for the synthesis of mitochondrial genome-encoded proteins, including at least some of the essential transmembrane subunits of the mitochondrial respiratory chain. The mitoribosomes are attached to the mitochondrial inner membrane and translation products are cotranslationally integrated into the membrane. The polypeptide is Small ribosomal subunit protein mS29 (rsm23) (Neurospora crassa (strain ATCC 24698 / 74-OR23-1A / CBS 708.71 / DSM 1257 / FGSC 987)).